Consider the following 540-residue polypeptide: Chaperonin GroEL 2 (540 aa).

ATP contacts are provided by residues 29-32 (TLGP), 86-90 (DGTTT), Gly413, and Asp492. The tract at residues 521–540 (KPEKEKASVPGGGDMGGMDF) is disordered. Gly residues predominate over residues 530–540 (PGGGDMGGMDF).

Belongs to the chaperonin (HSP60) family. As to quaternary structure, forms a cylinder of 14 subunits composed of two heptameric rings stacked back-to-back. Interacts with the co-chaperonin GroES.

The protein localises to the secreted. It is found in the capsule. The protein resides in the cell surface. It localises to the cell wall. It catalyses the reaction ATP + H2O + a folded polypeptide = ADP + phosphate + an unfolded polypeptide.. Functionally, together with its co-chaperonin GroES, plays an essential role in assisting protein folding. The GroEL-GroES system forms a nano-cage that allows encapsulation of the non-native substrate proteins and provides a physical environment optimized to promote and accelerate protein folding. This is Chaperonin GroEL 2 from Mycobacterium tuberculosis (strain ATCC 25177 / H37Ra).